Consider the following 264-residue polypeptide: MSKITTTNLLKMKQEGQRITAITAYDATFAKLFDDEGAHVLLIGDSLGMVLQGGQDTLGVSMDEMVYHTRCVVRGTTNALVVTDMPFMSYATPEQTYQNAARLMAAGARMVKMEGGDWLCDSIRHLTRNGVPVCGHLGLTPQSVHVFGGFKVQGRDEFQAQEIYRQALELQAAGIQLLVLECVPTSLAERISKALRIPVIGIGAGPATDGQILVMHDAFGITSGYVPKFTKNFLAETGDMRAAIRLYVKQVSEGTFPGPEHCFN.

Mg(2+) is bound by residues aspartate 45 and aspartate 84. Residues aspartate 45–serine 46, aspartate 84, and lysine 112 each bind 3-methyl-2-oxobutanoate. A Mg(2+)-binding site is contributed by glutamate 114. Catalysis depends on glutamate 181, which acts as the Proton acceptor.

It belongs to the PanB family. Homodecamer; pentamer of dimers. Mg(2+) is required as a cofactor.

The protein localises to the cytoplasm. It catalyses the reaction 3-methyl-2-oxobutanoate + (6R)-5,10-methylene-5,6,7,8-tetrahydrofolate + H2O = 2-dehydropantoate + (6S)-5,6,7,8-tetrahydrofolate. It functions in the pathway cofactor biosynthesis; (R)-pantothenate biosynthesis; (R)-pantoate from 3-methyl-2-oxobutanoate: step 1/2. Its function is as follows. Catalyzes the reversible reaction in which hydroxymethyl group from 5,10-methylenetetrahydrofolate is transferred onto alpha-ketoisovalerate to form ketopantoate. The chain is 3-methyl-2-oxobutanoate hydroxymethyltransferase from Aeromonas hydrophila subsp. hydrophila (strain ATCC 7966 / DSM 30187 / BCRC 13018 / CCUG 14551 / JCM 1027 / KCTC 2358 / NCIMB 9240 / NCTC 8049).